The primary structure comprises 131 residues: Small ribosomal subunit protein uS8 (131 aa).

Belongs to the universal ribosomal protein uS8 family. As to quaternary structure, part of the 30S ribosomal subunit. Contacts proteins S5 and S12.

Its function is as follows. One of the primary rRNA binding proteins, it binds directly to 16S rRNA central domain where it helps coordinate assembly of the platform of the 30S subunit. The polypeptide is Small ribosomal subunit protein uS8 (Azoarcus sp. (strain BH72)).